Consider the following 252-residue polypeptide: tRNA (guanine-N(1)-)-methyltransferase (252 aa).

S-adenosyl-L-methionine is bound by residues G113 and 133–138 (LGDYVL).

This sequence belongs to the RNA methyltransferase TrmD family. In terms of assembly, homodimer.

The protein localises to the cytoplasm. It catalyses the reaction guanosine(37) in tRNA + S-adenosyl-L-methionine = N(1)-methylguanosine(37) in tRNA + S-adenosyl-L-homocysteine + H(+). In terms of biological role, specifically methylates guanosine-37 in various tRNAs. This is tRNA (guanine-N(1)-)-methyltransferase from Stenotrophomonas maltophilia (strain K279a).